The following is a 211-amino-acid chain: ATP phosphoribosyltransferase (211 aa).

This sequence belongs to the ATP phosphoribosyltransferase family. Short subfamily. In terms of assembly, heteromultimer composed of HisG and HisZ subunits.

It is found in the cytoplasm. The catalysed reaction is 1-(5-phospho-beta-D-ribosyl)-ATP + diphosphate = 5-phospho-alpha-D-ribose 1-diphosphate + ATP. The protein operates within amino-acid biosynthesis; L-histidine biosynthesis; L-histidine from 5-phospho-alpha-D-ribose 1-diphosphate: step 1/9. Catalyzes the condensation of ATP and 5-phosphoribose 1-diphosphate to form N'-(5'-phosphoribosyl)-ATP (PR-ATP). Has a crucial role in the pathway because the rate of histidine biosynthesis seems to be controlled primarily by regulation of HisG enzymatic activity. The polypeptide is ATP phosphoribosyltransferase (Bacillus mycoides (strain KBAB4) (Bacillus weihenstephanensis)).